The sequence spans 189 residues: Thermostable direct hemolysin 1 (189 aa).

An N-terminal signal peptide occupies residues 1 to 24 (MKHQYFAKKSFLFISMLAAFKTSA). A disulfide bridge connects residues cysteine 175 and cysteine 185.

The protein belongs to the TDH hemolysin family. In terms of assembly, homodimer.

In terms of biological role, bacterial hemolysins are exotoxins that attack blood cell membranes and cause cell rupture by mechanisms not clearly defined. The sequence is that of Thermostable direct hemolysin 1 (tdh1) from Vibrio parahaemolyticus serotype O3:K6 (strain RIMD 2210633).